We begin with the raw amino-acid sequence, 225 residues long: MAKVSDLALLLVAGMAISLYIQETGAVKFDIKNQCGYTVWAAGLPGGGQQLTQGQTWTVNLAAGTQSARFWGRTGCSFDASGKGTCQTGDCGGQLSCTVSGAVPATLAEYTQSDQDYYDVSLVDGFNIPLSINPTNAQCTAPACKADVNAVCPAELKVDGGCKSACAAFQTDQYCCTGTYANSCPATNYSMIFKNQCPQAYSYPKDDTATFACPSGTDYSIVFCP.

The N-terminal stretch at 1–26 is a signal peptide; that stretch reads MAKVSDLALLLVAGMAISLYIQETGA. 8 cysteine pairs are disulfide-bonded: Cys-35–Cys-224, Cys-76–Cys-86, Cys-91–Cys-97, Cys-139–Cys-213, Cys-144–Cys-197, Cys-152–Cys-162, Cys-166–Cys-175, and Cys-176–Cys-184. A glycan (N-linked (GlcNAc...) asparagine) is linked at Asn-188.

It belongs to the thaumatin family.

In terms of biological role, may be involved in disease resistance. The protein is Pathogenesis-related thaumatin-like protein 3.8 of Cryptomeria japonica (Japanese cedar).